Consider the following 629-residue polypeptide: Aspartate--tRNA(Asp/Asn) ligase (629 aa).

The tract at residues Met1–Asp24 is disordered. Residues Glu12–Asp24 show a composition bias toward basic and acidic residues. An L-aspartate-binding site is contributed by Glu194. The aspartate stretch occupies residues Gln218–Lys221. Arg240 serves as a coordination point for L-aspartate. ATP-binding positions include Arg240–Glu242 and Gln249. His474 serves as a coordination point for L-aspartate. Glu508 contributes to the ATP binding site. Arg515 serves as a coordination point for L-aspartate. Gly560–Arg563 is an ATP binding site.

It belongs to the class-II aminoacyl-tRNA synthetase family. Type 1 subfamily. Homodimer.

The protein localises to the cytoplasm. The enzyme catalyses tRNA(Asx) + L-aspartate + ATP = L-aspartyl-tRNA(Asx) + AMP + diphosphate. In terms of biological role, aspartyl-tRNA synthetase with relaxed tRNA specificity since it is able to aspartylate not only its cognate tRNA(Asp) but also tRNA(Asn). Reaction proceeds in two steps: L-aspartate is first activated by ATP to form Asp-AMP and then transferred to the acceptor end of tRNA(Asp/Asn). The polypeptide is Aspartate--tRNA(Asp/Asn) ligase (Salinibacter ruber (strain DSM 13855 / M31)).